The primary structure comprises 1456 residues: Alpha-2-macroglobulin-like protein 1 (1456 aa).

The first 19 residues, 1 to 19, serve as a signal peptide directing secretion; it reads MVPTILLSALLLHFTDVVA. 3 N-linked (GlcNAc...) asparagine glycosylation sites follow: Asn-48, Asn-172, and Asn-868.

The protein belongs to the protease inhibitor I39 (alpha-2-macroglobulin) family. Homotetramer; consists of two dimer pairs that are disulfide-linked. Part of a complex composed of complement component C3, CLCA1/CLCA3, A2ML1/OH and ALB/serum albumin.

The protein localises to the secreted. Functionally, inhibits protease gelatinolytic complex activity against type 1 collagen. This is Alpha-2-macroglobulin-like protein 1 from Mus musculus (Mouse).